Consider the following 876-residue polypeptide: Alanine--tRNA ligase (876 aa).

Residues 2–461 are catalytic; the sequence is SKSTAEIRQA…VDSASEFKGY (460 aa). Lys74 carries the post-translational modification N6-acetyllysine. Residues 553 to 705 are editing; sequence DEARRARIRL…EAVTGEGAIA (153 aa). Zn(2+)-binding residues include His564, His568, Cys666, and His670. Residues 699 to 808 are important for oligomerization; it reads TGEGAIATVH…STIIVLATVV (110 aa). The interval 766-875 is C-Ala domain; it reads IDVNGVKLLV…SVKGWVSAKL (110 aa).

Belongs to the class-II aminoacyl-tRNA synthetase family. Homotetramer. Requires Zn(2+) as cofactor.

It localises to the cytoplasm. It carries out the reaction tRNA(Ala) + L-alanine + ATP = L-alanyl-tRNA(Ala) + AMP + diphosphate. The enzyme catalyses (S)-lactate + ATP + H(+) = (S)-lactoyl-AMP + diphosphate. It catalyses the reaction (S)-lactoyl-AMP + L-lysyl-[protein] = N(6)-[(S)-lactoyl]-L-lysyl-[protein] + AMP + 2 H(+). Its activity is regulated as follows. Acetylation at Lys-74 decreases the alanylation activity for tRNA(Ala); a protein that is fully acetylated is inactive in vitro. In terms of biological role, catalyzes the attachment of L-alanine to tRNA(Ala) in a two-step reaction: L-alanine is first activated by ATP to form Ala-AMP and then transferred to the acceptor end of tRNA(Ala). AlaRS also incorrectly activates the sterically smaller amino acid glycine as well as the sterically larger amino acid L-serine; generates 2-fold more mischarged Gly than Ser. These mischarged amino acids occur because the of inherent physicochemical limitations on discrimination between closely related amino acids (Ala, Gly and Ser) in the charging step. In presence of high levels of lactate, also acts as a protein lactyltransferase that mediates lactylation of lysine residues in target proteins. Functionally, edits mischarged Ser-tRNA(Ala) and Gly-tRNA(Ala) but not incorrectly charged Ser-tRNA(Thr). Dtd edits Gly-tRNA(Ala) 4-fold better than does AlaRS. Attaches Ala to transfer-messenger RNA (tmRNA, also known as 10Sa RNA, the product of the ssrA gene). tmRNA plays a major role in rescue of stalled ribosomes via trans-translation. In Escherichia coli (strain K12), this protein is Alanine--tRNA ligase (alaS).